A 466-amino-acid chain; its full sequence is Alpha-1,3-mannosyltransferase CMT1 (466 aa).

Positions 1-23 (MFRNTLRTFPRPATPSLPTSSHS) are disordered. Residues 1–33 (MFRNTLRTFPRPATPSLPTSSHSPIARASLSKS) lie on the Cytoplasmic side of the membrane. Residues 34 to 54 (PLFVLSLVLVCIFFLSFLSHP) form a helical; Signal-anchor for type II membrane protein membrane-spanning segment. Topologically, residues 55 to 466 (DPSARKLQWP…ETRWVQPWLE (412 aa)) are lumenal.

Mg(2+) serves as cofactor. Mn(2+) is required as a cofactor. The cofactor is Co(2+).

It localises to the golgi apparatus membrane. Its pathway is protein modification; protein glycosylation. In terms of biological role, responsible for addition of mannose residues in an alpha-1,3 linkage to a polymannosly precursor. May be involved in synthesis of capsule glucuronoxylomannan. In Cryptococcus neoformans var. neoformans serotype D (strain JEC21 / ATCC MYA-565) (Filobasidiella neoformans), this protein is Alpha-1,3-mannosyltransferase CMT1.